Consider the following 139-residue polypeptide: MAKTIKDIKAMVEQAAIQSIHKSSSNVKQIMVKTGQEHIVEDVYGAYDPLLYERTGQVKDAFITTNESNGVSLDNIREDDGKDIATVIETGQGYTYPDSYGYGYGNPRPFMKNTSETLRDGRLTAALKKDLKADGIKTD.

The polypeptide is SPbeta prophage-derived uncharacterized protein YomN (yomN) (Bacillus subtilis (strain 168)).